A 208-amino-acid chain; its full sequence is Na(+)-translocating NADH-quinone reductase subunit D (208 aa).

5 consecutive transmembrane segments (helical) span residues 42–62 (FVMA…VSLI), 72–92 (IIVQ…ILKA), 103–123 (VFVG…AFAM), 131–151 (FVDG…VAFF), and 178–198 (NGLF…IWGL).

This sequence belongs to the NqrDE/RnfAE family. Composed of six subunits; NqrA, NqrB, NqrC, NqrD, NqrE and NqrF.

The protein resides in the cell inner membrane. The enzyme catalyses a ubiquinone + n Na(+)(in) + NADH + H(+) = a ubiquinol + n Na(+)(out) + NAD(+). Its function is as follows. NQR complex catalyzes the reduction of ubiquinone-1 to ubiquinol by two successive reactions, coupled with the transport of Na(+) ions from the cytoplasm to the periplasm. NqrA to NqrE are probably involved in the second step, the conversion of ubisemiquinone to ubiquinol. The chain is Na(+)-translocating NADH-quinone reductase subunit D from Haemophilus influenzae (strain 86-028NP).